Consider the following 200-residue polypeptide: LIM domain-containing protein WLIM2a (200 aa).

LIM zinc-binding domains are found at residues glutamine 8 to glutamate 68 and aspartate 107 to glutamate 167.

As to quaternary structure, interacts with F-actin. As to expression, expressed in roots, leaves, stems, flowers and siliques. Barely detected in pollen.

The protein resides in the cytoplasm. It localises to the cytoskeleton. Binds to actin filaments and promotes cross-linking into thick bundles. Has an actin-stabilizing activity. The actin regulatory activities are not regulated by pH and [Ca(2+)]. The chain is LIM domain-containing protein WLIM2a from Arabidopsis thaliana (Mouse-ear cress).